The sequence spans 333 residues: Phosphoribosylformylglycinamidine cyclo-ligase (333 aa).

Belongs to the AIR synthase family.

It localises to the cytoplasm. It catalyses the reaction 2-formamido-N(1)-(5-O-phospho-beta-D-ribosyl)acetamidine + ATP = 5-amino-1-(5-phospho-beta-D-ribosyl)imidazole + ADP + phosphate + H(+). The protein operates within purine metabolism; IMP biosynthesis via de novo pathway; 5-amino-1-(5-phospho-D-ribosyl)imidazole from N(2)-formyl-N(1)-(5-phospho-D-ribosyl)glycinamide: step 2/2. The sequence is that of Phosphoribosylformylglycinamidine cyclo-ligase from Clostridium perfringens (strain ATCC 13124 / DSM 756 / JCM 1290 / NCIMB 6125 / NCTC 8237 / Type A).